Consider the following 149-residue polypeptide: D-aminoacyl-tRNA deacylase (149 aa).

Positions 137 to 138 match the Gly-cisPro motif, important for rejection of L-amino acids motif; sequence GP.

The protein belongs to the DTD family. As to quaternary structure, homodimer.

The protein localises to the cytoplasm. The enzyme catalyses glycyl-tRNA(Ala) + H2O = tRNA(Ala) + glycine + H(+). It carries out the reaction a D-aminoacyl-tRNA + H2O = a tRNA + a D-alpha-amino acid + H(+). An aminoacyl-tRNA editing enzyme that deacylates mischarged D-aminoacyl-tRNAs. Also deacylates mischarged glycyl-tRNA(Ala), protecting cells against glycine mischarging by AlaRS. Acts via tRNA-based rather than protein-based catalysis; rejects L-amino acids rather than detecting D-amino acids in the active site. By recycling D-aminoacyl-tRNA to D-amino acids and free tRNA molecules, this enzyme counteracts the toxicity associated with the formation of D-aminoacyl-tRNA entities in vivo and helps enforce protein L-homochirality. This chain is D-aminoacyl-tRNA deacylase, found in Thermotoga petrophila (strain ATCC BAA-488 / DSM 13995 / JCM 10881 / RKU-1).